A 1104-amino-acid polypeptide reads, in one-letter code: Ankyrin repeat- and BTB/POZ domain-containing protein 3 (1104 aa).

The helical transmembrane segment at 168 to 188 (IVLSWGLAAHCTAAALAALSL) threads the bilayer. The segment at 260–301 (SCSGPGSGSGSGPGPSSGPGAAPAADKEREAPGGGAASGGAC) is disordered. The segment covering 264 to 276 (PGSGSGSGPGPSS) has biased composition (gly residues). ANK repeat units lie at residues 603 to 632 (QGMT…DLNV), 649 to 678 (RHWT…KVEG), 687 to 716 (YSET…DPLI), 730 to 759 (GDMN…KEKS), and 825 to 854 (TWLE…TIQE). The 67-residue stretch at 923 to 989 (SDVTFLVEGR…LYYGGPESLL (67 aa)) folds into the BTB domain.

Its subcellular location is the membrane. The protein is Ankyrin repeat- and BTB/POZ domain-containing protein 3 of Homo sapiens (Human).